The following is a 310-amino-acid chain: Metal ABC transporter substrate-binding lipoprotein ScbA (310 aa).

An N-terminal signal peptide occupies residues 1–19; the sequence is MKKCRFLVLLLLAFVGLAA. Residue Cys20 is the site of N-palmitoyl cysteine attachment. Cys20 carries S-diacylglycerol cysteine lipidation. A divalent metal cation contacts are provided by His68, His140, Glu206, and Asp281.

Belongs to the bacterial solute-binding protein 9 family.

It is found in the cell membrane. Its function is as follows. Part of an ATP-binding cassette (ABC) transport system involved in metal import. Binds a metal with high affinity and specificity and delivers it to the membrane permease for translocation into the cytoplasm. Part of an ATP-driven transport system for manganese. Does not exhibit adhesion properties. This Streptococcus cristatus protein is Metal ABC transporter substrate-binding lipoprotein ScbA (scbA).